The primary structure comprises 355 residues: MTALKNDRFLRALLKQPVDVTPVWMMRQAGRYLPEYRASRANAGDFMSLCMNPEFACEVTLQPLDRYPQLDAAILFSDILTIPDAMGQGLYFETGEGPRFKKVVSTLADIEALPIPDPHKDLGYVMDAVSTIRRELNGRVPLIGFSGSPWTLATYMVEGGSSKDFRKSKAMLYDNPQAMHLLLDKLAQSVTAYLNGQIRAGAQAVQIFDSWGGSLSAAAYQEFSLAYMRKIVSGLIREHDGRKVPVILFTKGGGLWLESIADAGADSLGLDWTCDIGEARRRVGSKVSLQGNMDPTVLYANPQAIRSEVARILASYGKGSGHVFNLGHGITPEVKPEHAGAFLEAVHELSAQYHE.

Substrate is bound by residues 27–31, aspartate 78, tyrosine 155, serine 210, and histidine 328; that span reads RQAGR.

Belongs to the uroporphyrinogen decarboxylase family. In terms of assembly, homodimer.

It is found in the cytoplasm. It carries out the reaction uroporphyrinogen III + 4 H(+) = coproporphyrinogen III + 4 CO2. It participates in porphyrin-containing compound metabolism; protoporphyrin-IX biosynthesis; coproporphyrinogen-III from 5-aminolevulinate: step 4/4. Its function is as follows. Catalyzes the decarboxylation of four acetate groups of uroporphyrinogen-III to yield coproporphyrinogen-III. The chain is Uroporphyrinogen decarboxylase from Pseudomonas fluorescens (strain ATCC BAA-477 / NRRL B-23932 / Pf-5).